The chain runs to 514 residues: Ankyrin repeat domain-containing protein 34B (514 aa).

ANK repeat units follow at residues 9-38, 42-79, 83-113, and 117-146; these read SEGNSLIKAVHQSRLRLTRLLLEGGAYINE, RGETPLMIACKTKHVDHQSVSKAKMVKYLLENNADPNI, SGKTALMHACLEKAGPEVVSLLLKSGADLSL, and SSYSALVYAINSEDTETLKVLLSACKAKGK. The interval 220–249 is disordered; it reads NDDTWDPGSPVRKPALAPKGPKLPHAPPWV. The residue at position 263 (S263) is a Phosphoserine. Residue T272 is modified to Phosphothreonine. S296 is subject to Phosphoserine.

This sequence belongs to the ANKRD34 family. Phosphorylated.

It is found in the cytoplasm. The protein localises to the nucleus. The polypeptide is Ankyrin repeat domain-containing protein 34B (ANKRD34B) (Homo sapiens (Human)).